Reading from the N-terminus, the 688-residue chain is Glycine--tRNA ligase beta subunit (688 aa).

The protein belongs to the class-II aminoacyl-tRNA synthetase family. Tetramer of two alpha and two beta subunits.

It localises to the cytoplasm. The enzyme catalyses tRNA(Gly) + glycine + ATP = glycyl-tRNA(Gly) + AMP + diphosphate. This Shewanella sp. (strain MR-7) protein is Glycine--tRNA ligase beta subunit.